Here is a 136-residue protein sequence, read N- to C-terminus: 5-hydroxyisourate hydrolase (136 aa).

The signal sequence occupies residues 1–20 (MKRYILATVIASLVAAPAMA). Substrate is bound by residues His31, Arg69, and Tyr133.

Belongs to the transthyretin family. 5-hydroxyisourate hydrolase subfamily. In terms of assembly, homotetramer.

Its subcellular location is the periplasm. It carries out the reaction 5-hydroxyisourate + H2O = 5-hydroxy-2-oxo-4-ureido-2,5-dihydro-1H-imidazole-5-carboxylate + H(+). Catalyzes the hydrolysis of 5-hydroxyisourate (HIU) to 2-oxo-4-hydroxy-4-carboxy-5-ureidoimidazoline (OHCU). The chain is 5-hydroxyisourate hydrolase (hiuH) from Salmonella typhimurium (strain LT2 / SGSC1412 / ATCC 700720).